The sequence spans 397 residues: Succinate--CoA ligase [ADP-forming] subunit beta (397 aa).

The ATP-grasp domain maps to 9-254 (KALLRQYGAP…ETEEDPKELA (246 aa)). ATP-binding positions include Lys-46, 53-55 (GRG), Glu-109, Ser-112, and Glu-117. Positions 209 and 223 each coordinate Mg(2+). Residues Asn-274 and 331 to 333 (GIM) each bind substrate.

This sequence belongs to the succinate/malate CoA ligase beta subunit family. In terms of assembly, heterotetramer of two alpha and two beta subunits. Mg(2+) is required as a cofactor.

It catalyses the reaction succinate + ATP + CoA = succinyl-CoA + ADP + phosphate. The catalysed reaction is GTP + succinate + CoA = succinyl-CoA + GDP + phosphate. It functions in the pathway carbohydrate metabolism; tricarboxylic acid cycle; succinate from succinyl-CoA (ligase route): step 1/1. Its function is as follows. Succinyl-CoA synthetase functions in the citric acid cycle (TCA), coupling the hydrolysis of succinyl-CoA to the synthesis of either ATP or GTP and thus represents the only step of substrate-level phosphorylation in the TCA. The beta subunit provides nucleotide specificity of the enzyme and binds the substrate succinate, while the binding sites for coenzyme A and phosphate are found in the alpha subunit. The polypeptide is Succinate--CoA ligase [ADP-forming] subunit beta (Paracoccus denitrificans (strain Pd 1222)).